Consider the following 177-residue polypeptide: Ubiquinol-cytochrome c reductase iron-sulfur subunit (177 aa).

A helical transmembrane segment spans residues 18–38; it reads IVLTASSVAAVGAACAFWPII. Residues 88 to 175 enclose the Rieske domain; sequence ARAVKMSELI…YIFISDKKIR (88 aa). [2Fe-2S] cluster-binding residues include C120, H122, C139, and H142. Cysteines 125 and 141 form a disulfide.

The protein belongs to the Rieske iron-sulfur protein family. The main subunits of complex b-c1 are: cytochrome b, cytochrome c1 and the Rieske protein. [2Fe-2S] cluster serves as cofactor.

The protein localises to the cell membrane. The enzyme catalyses a quinol + 2 Fe(III)-[cytochrome c](out) = a quinone + 2 Fe(II)-[cytochrome c](out) + 2 H(+)(out). In terms of biological role, component of the ubiquinol-cytochrome c reductase complex (complex III or cytochrome b-c1 complex), which is a respiratory chain that generates an electrochemical potential coupled to ATP synthesis. This Rickettsia prowazekii (strain Madrid E) protein is Ubiquinol-cytochrome c reductase iron-sulfur subunit (petA).